A 414-amino-acid chain; its full sequence is Serine hydroxymethyltransferase (414 aa).

(6S)-5,6,7,8-tetrahydrofolate contacts are provided by residues leucine 117 and 121–123; that span reads GHL. Lysine 226 bears the N6-(pyridoxal phosphate)lysine mark. 349–351 contacts (6S)-5,6,7,8-tetrahydrofolate; that stretch reads SPF.

This sequence belongs to the SHMT family. As to quaternary structure, homodimer. Requires pyridoxal 5'-phosphate as cofactor.

Its subcellular location is the cytoplasm. The catalysed reaction is (6R)-5,10-methylene-5,6,7,8-tetrahydrofolate + glycine + H2O = (6S)-5,6,7,8-tetrahydrofolate + L-serine. Its pathway is one-carbon metabolism; tetrahydrofolate interconversion. It functions in the pathway amino-acid biosynthesis; glycine biosynthesis; glycine from L-serine: step 1/1. Catalyzes the reversible interconversion of serine and glycine with tetrahydrofolate (THF) serving as the one-carbon carrier. Also exhibits THF-independent aldolase activity toward beta-hydroxyamino acids, producing glycine and aldehydes, via a retro-aldol mechanism. The chain is Serine hydroxymethyltransferase from Methanospirillum hungatei JF-1 (strain ATCC 27890 / DSM 864 / NBRC 100397 / JF-1).